A 430-amino-acid chain; its full sequence is Serine--tRNA ligase (430 aa).

Residue 237–239 (TAE) coordinates L-serine. Residue 268–270 (RSE) coordinates ATP. An L-serine-binding site is contributed by Glu-291. 355–358 (EISS) lines the ATP pocket. Ser-391 contacts L-serine.

Belongs to the class-II aminoacyl-tRNA synthetase family. Type-1 seryl-tRNA synthetase subfamily. As to quaternary structure, homodimer. The tRNA molecule binds across the dimer.

It localises to the cytoplasm. The catalysed reaction is tRNA(Ser) + L-serine + ATP = L-seryl-tRNA(Ser) + AMP + diphosphate + H(+). It catalyses the reaction tRNA(Sec) + L-serine + ATP = L-seryl-tRNA(Sec) + AMP + diphosphate + H(+). Its pathway is aminoacyl-tRNA biosynthesis; selenocysteinyl-tRNA(Sec) biosynthesis; L-seryl-tRNA(Sec) from L-serine and tRNA(Sec): step 1/1. Catalyzes the attachment of serine to tRNA(Ser). Is also able to aminoacylate tRNA(Sec) with serine, to form the misacylated tRNA L-seryl-tRNA(Sec), which will be further converted into selenocysteinyl-tRNA(Sec). The protein is Serine--tRNA ligase of Salmonella heidelberg (strain SL476).